The sequence spans 599 residues: Stromal 70 kDa heat shock-related protein, chloroplastic (599 aa).

The interval Asn-545 to Lys-573 is disordered. Over residues Gly-554 to Gln-568 the composition is skewed to low complexity.

The protein belongs to the heat shock protein 70 family.

It is found in the plastid. The protein localises to the chloroplast stroma. Interacts with newly imported chloroplast proteins to assist in their maturation. The chain is Stromal 70 kDa heat shock-related protein, chloroplastic (CHSP70) from Spinacia oleracea (Spinach).